A 92-amino-acid polypeptide reads, in one-letter code: Probable acyl carrier protein (92 aa).

A Carrier domain is found at 11–92 (QVTFEELSAL…QVNATLRTAV (82 aa)). Ser49 carries the post-translational modification O-(pantetheine 4'-phosphoryl)serine.

4'-phosphopantetheine is transferred from CoA to a specific serine of the apo-ACP-like protein.

Its function is as follows. Involved in developmentally regulated synthesis of a compound biosynthetically related to polyketide antibiotics which is essential for spore color in Streptomyces halstedii. This Streptomyces halstedii protein is Probable acyl carrier protein (sch3).